Consider the following 35-residue polypeptide: Augerpeptide hheTx4 (35 aa).

Contains 4 disulfide bonds. In terms of tissue distribution, expressed by the venom duct.

It localises to the secreted. This is Augerpeptide hheTx4 from Hastula hectica (Sea snail).